We begin with the raw amino-acid sequence, 786 residues long: Probable aminopeptidase 1 (786 aa).

Substrate-binding positions include glutamate 103 and glycine 235–asparagine 239. Residue histidine 270 participates in Zn(2+) binding. Glutamate 271 acts as the Proton acceptor in catalysis. Residues histidine 274 and glutamate 293 each contribute to the Zn(2+) site.

The protein belongs to the peptidase M1 family. It depends on Zn(2+) as a cofactor.

It is found in the cytoplasm. The sequence is that of Probable aminopeptidase 1 (ape1) from Sulfurisphaera tokodaii (strain DSM 16993 / JCM 10545 / NBRC 100140 / 7) (Sulfolobus tokodaii).